A 57-amino-acid polypeptide reads, in one-letter code: MLKWALIFFVISLIAGVFGFTGISAAAAGVARILFFIAVVIFLVFLVLALMAGSAIV.

Transmembrane regions (helical) follow at residues 4-24 and 33-53; these read WALIFFVISLIAGVFGFTGIS and ILFFIAVVIFLVFLVLALMAG.

Belongs to the UPF0391 family.

It localises to the cell membrane. The protein is UPF0391 membrane protein Atu4467 of Agrobacterium fabrum (strain C58 / ATCC 33970) (Agrobacterium tumefaciens (strain C58)).